A 612-amino-acid polypeptide reads, in one-letter code: Threonine--tRNA ligase (612 aa).

Positions 218–509 are catalytic; the sequence is DHRKLGVELG…LSEHFWGNFP (292 aa). Zn(2+)-binding residues include C310, H361, and H486.

It belongs to the class-II aminoacyl-tRNA synthetase family. Homodimer. The cofactor is Zn(2+).

Its subcellular location is the cytoplasm. The enzyme catalyses tRNA(Thr) + L-threonine + ATP = L-threonyl-tRNA(Thr) + AMP + diphosphate + H(+). Its function is as follows. Catalyzes the attachment of threonine to tRNA(Thr) in a two-step reaction: L-threonine is first activated by ATP to form Thr-AMP and then transferred to the acceptor end of tRNA(Thr). Also edits incorrectly charged L-seryl-tRNA(Thr). The polypeptide is Threonine--tRNA ligase (Helicobacter acinonychis (strain Sheeba)).